Consider the following 541-residue polypeptide: Multidrug transporter protein MdtP (541 aa).

A run of 14 helical transmembrane segments spans residues 14–34 (LLIT…TIVG), 40–60 (IVGD…YLLT), 79–99 (IVYV…GMAN), 112–132 (GIGG…LFTG), 141–161 (VFGA…GWIV), 168–188 (WVFY…ARGL), 201–221 (IAGI…LSFG), 229–249 (SWQI…FIIV), 273–293 (LIGF…PFFM), 307–327 (IMTP…QLVY), 329–349 (IGIK…FLLL), 359–379 (LVAT…MPIL), 401–420 (FFRS…VMNA), and 492–512 (LHSV…FTLF).

This sequence belongs to the major facilitator superfamily. EmrB family.

The protein localises to the cell membrane. In terms of biological role, multidrug efflux transporter. Contributes to resistance to several antibiotics, including fusidic acid, novobiocin, streptomycin and actinomycin, possibly by pumping these structurally unrelated antibiotics out of cells. The chain is Multidrug transporter protein MdtP from Bacillus subtilis (strain 168).